Reading from the N-terminus, the 204-residue chain is Altered inheritance of mitochondria protein 20 (204 aa).

A helical transmembrane segment spans residues Val6–Phe26.

Belongs to the SKG1 family.

The protein localises to the vacuole membrane. Functionally, involved in cell cycle progression and surviving DNA damage. The chain is Altered inheritance of mitochondria protein 20 (AIM20) from Saccharomyces cerevisiae (strain JAY291) (Baker's yeast).